The following is a 288-amino-acid chain: Syntaxin-1A (288 aa).

The Cytoplasmic portion of the chain corresponds to 1-265 (MKDRTQELRT…KYQSKARRKK (265 aa)). Phosphoserine is present on residues Ser-14, Ser-64, and Ser-95. The stretch at 68–109 (DEKTKEELEELMSDIKKTANKVRSKLKSIEQSIEQEEGLNRS) forms a coiled coil. Ser-188 carries the phosphoserine; by DAPK1 modification. Residues 192-254 (LSEIETRHSE…ERAVSDTKKA (63 aa)) form the t-SNARE coiled-coil homology domain. Residues Lys-252, Lys-253, and Lys-256 each participate in a glycyl lysine isopeptide (Lys-Gly) (interchain with G-Cter in SUMO) cross-link. A helical; Anchor for type IV membrane protein transmembrane segment spans residues 266–286 (IMIIICCVIPGIVIASTVGGI). Residues 287 to 288 (FA) are Extracellular-facing.

This sequence belongs to the syntaxin family. As to quaternary structure, part of the SNARE core complex containing SNAP25, VAMP2 and STX1A; this complex constitutes the basic catalytic machinery of the complex neurotransmitter release apparatus. The SNARE complex interacts with CPLX1. Interacts with STXBP1. The interaction with STXBP1 promotes assembly of the SNARE complex. Interacts (via C-terminus) with KCNB1 (via C-terminus); the interaction increases in a calcium-dependent manner and induces a pore-independent enhancement of exocytosis in neuroendocrine cells, chromaffin cells, pancreatic beta cells and from the soma of dorsal root ganglia (DRG) neurons. Interacts with SYTL4. Interacts with STXBP6. Interacts with PLCL1 (via C2 domain). Interacts with OTOF. Interacts with LGI3. Interacts (via the H3 domain) with SLC6A4 (via the N-terminus); this interaction regulates SLC4A6 channel conductance in thalamocortical neurons. Interacts with SYT6 and SYT8; the interaction is Ca(2+)-dependent. Interacts with VAMP8. Interacts with SNAP23. Interacts with VAPA and SYBU. Interacts with PRRT2. Interacts with SEPT8. Interacts with STXBP5L. Interacts with synaptotagmin-1/SYT1. Interacts with SEPTIN5; in the cerebellar cortex. Interacts with SEPTIN4; in the striatum. In terms of processing, phosphorylated by CK2. Phosphorylation at Ser-188 by DAPK1 significantly decreases its interaction with STXBP1. Post-translationally, sumoylated, sumoylation is required for regulation of synaptic vesicle endocytosis.

It is found in the cytoplasmic vesicle. The protein localises to the secretory vesicle. Its subcellular location is the synaptic vesicle membrane. It localises to the cell membrane. The protein resides in the synapse. It is found in the synaptosome. Functionally, plays an essential role in hormone and neurotransmitter calcium-dependent exocytosis and endocytosis. Part of the SNARE (Soluble NSF Attachment Receptor) complex composed of SNAP25, STX1A and VAMP2 which mediates the fusion of synaptic vesicles with the presynaptic plasma membrane. STX1A and SNAP25 are localized on the plasma membrane while VAMP2 resides in synaptic vesicles. The pairing of the three SNAREs from the N-terminal SNARE motifs to the C-terminal anchors leads to the formation of the SNARE complex, which brings membranes into close proximity and results in final fusion. Participates in the calcium-dependent regulation of acrosomal exocytosis in sperm. Also plays an important role in the exocytosis of hormones such as insulin or glucagon-like peptide 1 (GLP-1). The chain is Syntaxin-1A (STX1A) from Pongo abelii (Sumatran orangutan).